The following is a 58-amino-acid chain: UPF0391 membrane protein Bxeno_A2959 (58 aa).

2 helical membrane passes run 4-24 (WALF…TGVA) and 33-53 (FLFI…FVVT).

It belongs to the UPF0391 family.

It localises to the cell membrane. The chain is UPF0391 membrane protein Bxeno_A2959 from Paraburkholderia xenovorans (strain LB400).